A 395-amino-acid chain; its full sequence is Elongation factor Tu (395 aa).

One can recognise a tr-type G domain in the interval 10–204 (KTHANIGTIG…AVDEYIPTPE (195 aa)). The segment at 19–26 (GHVDHGKT) is G1. 19-26 (GHVDHGKT) is a binding site for GTP. T26 serves as a coordination point for Mg(2+). Residues 60–64 (GITIN) are G2. The interval 81 to 84 (DCPG) is G3. Residues 81-85 (DCPGH) and 136-139 (NKVD) contribute to the GTP site. The G4 stretch occupies residues 136 to 139 (NKVD). A G5 region spans residues 174 to 176 (SAL).

The protein belongs to the TRAFAC class translation factor GTPase superfamily. Classic translation factor GTPase family. EF-Tu/EF-1A subfamily. As to quaternary structure, monomer.

The protein resides in the cytoplasm. The enzyme catalyses GTP + H2O = GDP + phosphate + H(+). Its function is as follows. GTP hydrolase that promotes the GTP-dependent binding of aminoacyl-tRNA to the A-site of ribosomes during protein biosynthesis. The chain is Elongation factor Tu from Macrococcus caseolyticus (strain JCSC5402) (Macrococcoides caseolyticum).